A 148-amino-acid chain; its full sequence is Snaclec 3 (148 aa).

An N-terminal signal peptide occupies residues 1–23 (WGDSSSSASACWSCSSPLSGTEA). 3 disulfides stabilise this stretch: Cys27-Cys38, Cys55-Cys144, and Cys121-Cys136. Positions 34-145 (YDQNCYKAFE…CSGTHSFVCK (112 aa)) constitute a C-type lectin domain.

Belongs to the snaclec family. As to quaternary structure, heterodimer; disulfide-linked. As to expression, expressed by the venom gland.

The protein resides in the secreted. Functionally, interferes with one step of hemostasis (modulation of platelet aggregation, or coagulation cascade, for example). The chain is Snaclec 3 from Echis carinatus sochureki (Saw-scaled viper).